A 139-amino-acid chain; its full sequence is Arsenate reductase (139 aa).

Residues C10, C82, and C89 each act as nucleophile in the active site. 2 disulfides stabilise this stretch: C10/C82 and C82/C89.

It belongs to the low molecular weight phosphotyrosine protein phosphatase family. Thioredoxin-coupled ArsC subfamily.

The protein resides in the cytoplasm. It carries out the reaction arsenate + [thioredoxin]-dithiol + H(+) = arsenite + [thioredoxin]-disulfide + H2O. In terms of biological role, catalyzes the reduction of arsenate [As(V)] to arsenite [As(III)]. The protein is Arsenate reductase of Halalkalibacterium halodurans (strain ATCC BAA-125 / DSM 18197 / FERM 7344 / JCM 9153 / C-125) (Bacillus halodurans).